The following is a 149-amino-acid chain: Large ribosomal subunit protein bL9 (149 aa).

The protein belongs to the bacterial ribosomal protein bL9 family.

Its function is as follows. Binds to the 23S rRNA. In Vibrio vulnificus (strain CMCP6), this protein is Large ribosomal subunit protein bL9.